A 353-amino-acid chain; its full sequence is Photosystem II protein D1 (353 aa).

At Thr2 the chain carries N-acetylthreonine. Thr2 carries the post-translational modification Phosphothreonine. Transmembrane regions (helical) follow at residues 29–46, 118–133, and 142–156; these read YIGW…TATS, HFLL…EWEL, and WIAV…AATA. His118 is a chlorophyll a binding site. Residue Tyr126 participates in pheophytin a binding. Positions 170 and 189 each coordinate [CaMn4O5] cluster. A helical transmembrane segment spans residues 197–218; sequence FHMLGVAGVFGGSLFSAMHGSL. His198 is a binding site for chlorophyll a. A quinone-binding positions include His215 and 264 to 265; that span reads SF. Residue His215 participates in Fe cation binding. His272 is a Fe cation binding site. A helical transmembrane segment spans residues 274 to 288; it reads FLAAWPVIGIWFTAL. His332, Glu333, Asp342, and Ala344 together coordinate [CaMn4O5] cluster. A propeptide spanning residues 345 to 353 is cleaved from the precursor; sequence SVEAPSVNG.

It belongs to the reaction center PufL/M/PsbA/D family. PSII is composed of 1 copy each of membrane proteins PsbA, PsbB, PsbC, PsbD, PsbE, PsbF, PsbH, PsbI, PsbJ, PsbK, PsbL, PsbM, PsbT, PsbX, PsbY, PsbZ, Psb30/Ycf12, at least 3 peripheral proteins of the oxygen-evolving complex and a large number of cofactors. It forms dimeric complexes. The D1/D2 heterodimer binds P680, chlorophylls that are the primary electron donor of PSII, and subsequent electron acceptors. It shares a non-heme iron and each subunit binds pheophytin, quinone, additional chlorophylls, carotenoids and lipids. D1 provides most of the ligands for the Mn4-Ca-O5 cluster of the oxygen-evolving complex (OEC). There is also a Cl(-1) ion associated with D1 and D2, which is required for oxygen evolution. The PSII complex binds additional chlorophylls, carotenoids and specific lipids. is required as a cofactor. Post-translationally, tyr-161 forms a radical intermediate that is referred to as redox-active TyrZ, YZ or Y-Z. In terms of processing, C-terminally processed by CTPA; processing is essential to allow assembly of the oxygen-evolving complex and thus photosynthetic growth.

The protein localises to the plastid. Its subcellular location is the chloroplast thylakoid membrane. The enzyme catalyses 2 a plastoquinone + 4 hnu + 2 H2O = 2 a plastoquinol + O2. Photosystem II (PSII) is a light-driven water:plastoquinone oxidoreductase that uses light energy to abstract electrons from H(2)O, generating O(2) and a proton gradient subsequently used for ATP formation. It consists of a core antenna complex that captures photons, and an electron transfer chain that converts photonic excitation into a charge separation. The D1/D2 (PsbA/PsbD) reaction center heterodimer binds P680, the primary electron donor of PSII as well as several subsequent electron acceptors. The polypeptide is Photosystem II protein D1 (Chlorokybus atmophyticus (Soil alga)).